The following is a 517-amino-acid chain: MSMNKGPTLLDGDLPEQENVLQRVLQLPVVSGTCECFQKTYNSTKEAHPLVASVCNAYEKGVQGASNLAAWSMEPVVRRLSTQFTAANELACRGLDHLEEKIPALQYPPEKIASELKGTISTRLRSARNSISVPIASTSDKVLGATLAGCELALGMAKETAEYAANTRVGRLASGGADLALGSIEKVVEFLLPPDKESAPSSGRQRTQKAPKAKPSLVRRVSTLANTLSRHTMQTTAWALKQGHSLAMWIPGVAPLSSLAQWGASAAMQVVSRRQSEVRVPWLHNLAASQDESHDDQTDTEGEETDDEEEEEESEAEENVLREVTALPNPRGLLGGVVHTVQNTLRNTISAVTWAPAAVLGTVGRILHLTPAQAVSSTKGRAMSLSDALKGVTDNVVDTVVHYVPLPRLSLMEPESEFRDIDNPSAEAERKGSGARPASPESTPRPGQPRGSLRSVRGLSAPSCPGLDDKTEASARPGFLAMPREKPARRVSDSFFRPSVMEPILGRAQYSQLRKKS.

Phosphoserine is present on Ser81. Thr85 bears the Phosphothreonine mark. A phosphoserine mark is found at Ser126, Ser130, Ser132, Ser137, and Ser174. Positions 195 to 216 (DKESAPSSGRQRTQKAPKAKPS) are disordered. Phosphothreonine is present on residues Thr223, Thr298, and Thr300. Residues 286-320 (LAASQDESHDDQTDTEGEETDDEEEEEESEAEENV) form a disordered region. The required for interaction with CIDEC stretch occupies residues 290–321 (QDESHDDQTDTEGEETDDEEEEEESEAEENVL). Residues 298–318 (TDTEGEETDDEEEEEESEAEE) are compositionally biased toward acidic residues. Phosphoserine is present on residues Ser314, Ser384, Ser386, Ser410, Ser433, Ser439, Ser460, Ser492, and Ser494. Residues 425–490 (SAEAERKGSG…AMPREKPARR (66 aa)) are disordered.

Belongs to the perilipin family. Interacts with ABHD5. Interacts with CIDEC. Interacts with AQP7. In terms of processing, major cAMP-dependent protein kinase-substrate in adipocytes, also dephosphorylated by PP1. When phosphorylated, may be maximally sensitive to HSL and when unphosphorylated, may play a role in the inhibition of lipolysis, by acting as a barrier in lipid droplet.

It is found in the endoplasmic reticulum. Its subcellular location is the lipid droplet. Functionally, modulator of adipocyte lipid metabolism. Coats lipid storage droplets to protect them from breakdown by hormone-sensitive lipase (HSL). Its absence may result in leanness. Plays a role in unilocular lipid droplet formation by activating CIDEC. Their interaction promotes lipid droplet enlargement and directional net neutral lipid transfer. May modulate lipolysis and triglyceride levels. The sequence is that of Perilipin-1 (Plin1) from Mus musculus (Mouse).